The chain runs to 181 residues: Regulator of G-protein signaling 5 (181 aa).

Positions Ser64–Ile180 constitute an RGS domain.

It is found in the cytoplasm. The protein localises to the membrane. Its function is as follows. Inhibits signal transduction by increasing the GTPase activity of G protein alpha subunits thereby driving them into their inactive GDP-bound form. Binds to G(i)-alpha and G(o)-alpha, but not to G(s)-alpha. The chain is Regulator of G-protein signaling 5 (RGS5) from Sus scrofa (Pig).